We begin with the raw amino-acid sequence, 885 residues long: Ankyrin repeat and SAM domain-containing protein 6 (885 aa).

10 ANK repeats span residues 8 to 37 (PGLQ…EPVA), 68 to 97 (AGNS…SVNS), 101 to 130 (YGWS…DVNA), 134 to 163 (LGAS…TVDH), 181 to 210 (LGIT…DPNH), 215 to 244 (VGWS…NPDH), 282 to 312 (KRRP…HVNL), 316 to 345 (DGAT…DMNK), 350 to 379 (HGWT…DVTL), and 383 to 414 (NGYT…QVNK). 3-hydroxyasparagine is present on N129. Disordered stretches follow at residues 415 to 439 (DRGG…SIPM), 491 to 522 (MRAP…PRRE), 563 to 775 (SSDR…ITDE), and 855 to 885 (FESS…SSRR). Low complexity predominate over residues 608–640 (PSISRSPTSPASSGNFNHSPHSSGGASGVGSMS). S650 is modified (phosphoserine). Polar residues predominate over residues 650–662 (SGGSVDSVLSQIA). 2 stretches are compositionally biased toward low complexity: residues 689–713 (GSSP…TSSS) and 722–739 (PPSG…TLTP). 2 positions are modified to phosphoserine: S734 and S742. Residues 750-770 (SSVSSSSSHRQSKSSGGSSSG) are compositionally biased toward low complexity. Residues 773-836 (TDEDELTGIL…LAAISELNAG (64 aa)) enclose the SAM domain. Residues 855 to 865 (FESSASNTRAP) are compositionally biased toward polar residues. Over residues 876 to 885 (RPEETVSSRR) the composition is skewed to basic and acidic residues.

Homooligomer. Interacts with NEK8. Central component of a complex containing at least ANKS6, INVS, NEK8 and NPHP3. ANKS6 may organize complex assembly by linking INVS and NPHP3 to NEK8 and INVS may target the complex to the proximal ciliary axoneme. Interacts (via SAM domain) with BICC1 (via KH domains) in an RNA-dependent manner. Interacts (via SAM domain) with ANKS3 (via SAM domain). Post-translationally, hydroxylated at Asn-129, most probably by HIF1AN. This hydroxylation results in decreased NEK8-binding. As to expression, widely expressed with moderate level in brain, skeletal muscle and testis. Expressed in renal tubules.

The protein resides in the cell projection. Its subcellular location is the cilium. It is found in the cytoplasm. Functionally, required for renal function. The sequence is that of Ankyrin repeat and SAM domain-containing protein 6 (Anks6) from Rattus norvegicus (Rat).